The primary structure comprises 309 residues: Probable lipid kinase YegS-like (309 aa).

Positions 1–134 constitute a DAGKc domain; that stretch reads MAPSHWRLIL…VDLLRIDADH (134 aa). Residues threonine 39, 65–71, and threonine 96 each bind ATP; that span reads GDGTLSE. 3 residues coordinate Mg(2+): leucine 219, aspartate 222, and leucine 224. The Proton acceptor role is filled by glutamate 280.

The protein belongs to the diacylglycerol/lipid kinase family. YegS lipid kinase subfamily. It depends on Mg(2+) as a cofactor. Requires Ca(2+) as cofactor.

It localises to the cytoplasm. Its function is as follows. Probably phosphorylates lipids; the in vivo substrate is unknown. This is Probable lipid kinase YegS-like from Xanthomonas axonopodis pv. citri (strain 306).